The sequence spans 360 residues: Inward rectifier potassium channel 13 (360 aa).

Residues 1–50 (MESSNCKVITPLLSQRHRRMVTKDGHSTLQTDGAPRGLVYLRDAWGTLID) lie on the Cytoplasmic side of the membrane. Residues 51–77 (MRWRWVMLVFSASFVLHWLVFAVLWYV) traverse the membrane as a helical segment. Over 78–105 (LAEMNGDLELDHDAPPENHTICVKYITS) the chain is Extracellular. Positions 106–122 (FTAAFSFSLETQLTIGY) form an intramembrane region, helical; Pore-forming. A Selectivity filter motif is present at residues 119–124 (TIGYGT). Topologically, residues 123 to 131 (GTMFPSGDC) are extracellular. Residues 132-157 (PSAIALLAIQMLLGLMLEAFITGAFV) traverse the membrane as a helical segment. Residues 158-360 (AKIARPKNRA…FQISETGLTE (203 aa)) are Cytoplasmic-facing. At serine 201 the chain carries Phosphoserine; by PKC. The residue at position 287 (serine 287) is a Phosphoserine; by PKA.

The protein belongs to the inward rectifier-type potassium channel (TC 1.A.2.1) family. KCNJ13 subfamily. As to quaternary structure, homotetramer. Post-translationally, phosphorylation at Ser-201 by PKC strongly inhibits ionic currents, while phosphorylation at Ser-287 by PKA increases them.

Its subcellular location is the membrane. The protein resides in the cell membrane. It carries out the reaction K(+)(in) = K(+)(out). Its activity is regulated as follows. Inhibited by Ba(2+) and Cs(+), although sensitivity to those inhibitors is much lower than in other Kir channels. Inward rectifier potassium channels are characterized by a greater tendency to allow potassium to flow into the cell rather than out of it. Their voltage dependence is regulated by the concentration of extracellular potassium; as external potassium is raised, the voltage range of the channel opening shifts to more positive voltages. The inward rectification is mainly due to the blockage of outward current by internal magnesium. KCNJ13 has a very low single channel conductance, low sensitivity to block by external barium and cesium, and no dependence of its inward rectification properties on the internal blocking particle magnesium. This Cavia porcellus (Guinea pig) protein is Inward rectifier potassium channel 13 (KCNJ13).